We begin with the raw amino-acid sequence, 225 residues long: Biosynthetic peptidoglycan transglycosylase (225 aa).

A helical transmembrane segment spans residues serine 7–valine 27.

Belongs to the glycosyltransferase 51 family.

It is found in the cell inner membrane. It carries out the reaction [GlcNAc-(1-&gt;4)-Mur2Ac(oyl-L-Ala-gamma-D-Glu-L-Lys-D-Ala-D-Ala)](n)-di-trans,octa-cis-undecaprenyl diphosphate + beta-D-GlcNAc-(1-&gt;4)-Mur2Ac(oyl-L-Ala-gamma-D-Glu-L-Lys-D-Ala-D-Ala)-di-trans,octa-cis-undecaprenyl diphosphate = [GlcNAc-(1-&gt;4)-Mur2Ac(oyl-L-Ala-gamma-D-Glu-L-Lys-D-Ala-D-Ala)](n+1)-di-trans,octa-cis-undecaprenyl diphosphate + di-trans,octa-cis-undecaprenyl diphosphate + H(+). Its pathway is cell wall biogenesis; peptidoglycan biosynthesis. In terms of biological role, peptidoglycan polymerase that catalyzes glycan chain elongation from lipid-linked precursors. The chain is Biosynthetic peptidoglycan transglycosylase from Vibrio parahaemolyticus serotype O3:K6 (strain RIMD 2210633).